Here is a 278-residue protein sequence, read N- to C-terminus: Checkpoint protein HUS1B (278 aa).

It belongs to the HUS1 family. As to quaternary structure, interacts with RAD1 and RAD9B. As to expression, expressed strongly in testis, less in spleen, thymus, prostate, colon and leukocytes.

This Homo sapiens (Human) protein is Checkpoint protein HUS1B (HUS1B).